A 445-amino-acid chain; its full sequence is 3-phosphoshikimate 1-carboxyvinyltransferase (445 aa).

3-phosphoshikimate-binding residues include Lys28, Ser29, and Arg33. Phosphoenolpyruvate is bound at residue Lys28. Residues Gly101 and Arg129 each contribute to the phosphoenolpyruvate site. 3-phosphoshikimate-binding residues include Ser175, Gln177, Asp328, and Lys355. Gln177 provides a ligand contact to phosphoenolpyruvate. Asp328 serves as the catalytic Proton acceptor. Phosphoenolpyruvate is bound by residues Arg359 and Arg402.

It belongs to the EPSP synthase family. Monomer.

Its subcellular location is the cytoplasm. It carries out the reaction 3-phosphoshikimate + phosphoenolpyruvate = 5-O-(1-carboxyvinyl)-3-phosphoshikimate + phosphate. The protein operates within metabolic intermediate biosynthesis; chorismate biosynthesis; chorismate from D-erythrose 4-phosphate and phosphoenolpyruvate: step 6/7. Functionally, catalyzes the transfer of the enolpyruvyl moiety of phosphoenolpyruvate (PEP) to the 5-hydroxyl of shikimate-3-phosphate (S3P) to produce enolpyruvyl shikimate-3-phosphate and inorganic phosphate. The protein is 3-phosphoshikimate 1-carboxyvinyltransferase of Bradyrhizobium sp. (strain BTAi1 / ATCC BAA-1182).